A 217-amino-acid polypeptide reads, in one-letter code: Ribonuclease HII (217 aa).

The region spanning Trp-34 to Asp-217 is the RNase H type-2 domain. The a divalent metal cation site is built by Asp-40, Glu-41, and Asp-131.

The protein belongs to the RNase HII family. Mn(2+) is required as a cofactor. The cofactor is Mg(2+).

It localises to the cytoplasm. It carries out the reaction Endonucleolytic cleavage to 5'-phosphomonoester.. Functionally, endonuclease that specifically degrades the RNA of RNA-DNA hybrids. The sequence is that of Ribonuclease HII from Agrobacterium fabrum (strain C58 / ATCC 33970) (Agrobacterium tumefaciens (strain C58)).